The primary structure comprises 338 residues: D-erythrose-4-phosphate dehydrogenase (338 aa).

11–12 is an NAD(+) binding site; it reads RI. Residues 153–155, arginine 199, 212–213, and arginine 235 each bind substrate; these read SCT and TK. Cysteine 154 functions as the Nucleophile in the catalytic mechanism. Asparagine 317 contacts NAD(+).

This sequence belongs to the glyceraldehyde-3-phosphate dehydrogenase family. Epd subfamily. Homotetramer.

It localises to the cytoplasm. It catalyses the reaction D-erythrose 4-phosphate + NAD(+) + H2O = 4-phospho-D-erythronate + NADH + 2 H(+). The protein operates within cofactor biosynthesis; pyridoxine 5'-phosphate biosynthesis; pyridoxine 5'-phosphate from D-erythrose 4-phosphate: step 1/5. Functionally, catalyzes the NAD-dependent conversion of D-erythrose 4-phosphate to 4-phosphoerythronate. The sequence is that of D-erythrose-4-phosphate dehydrogenase from Shewanella amazonensis (strain ATCC BAA-1098 / SB2B).